Reading from the N-terminus, the 148-residue chain is LTEEQKQEXREAFDLFDTDGSGTIDAKELKVXMXALGFEPKKEEIQKMISDIDKDGSGTIDFEEFLQMMTAKMGERDSREEIMKAFRLFDDDQTGKITFKNLKRVAKELGENLTDEEIQEMIDEADRDGDGEINEEEFFRIMKKTSLF.

4 consecutive EF-hand domains span residues 4-39, 40-75, 77-112, and 113-148; these read EQKQEXREAFDLFDTDGSGTIDAKELKVXMXALGFE, PKKEEIQKMISDIDKDGSGTIDFEEFLQMMTAKMGE, DSREEIMKAFRLFDDDQTGKITFKNLKRVAKELGEN, and LTDEEIQEMIDEADRDGDGEINEEEFFRIMKKTSLF. Ca(2+)-binding residues include aspartate 17, aspartate 19, serine 21, threonine 23, glutamate 28, aspartate 53, aspartate 55, serine 57, threonine 59, and glutamate 64. The Ca(2+) site is built by aspartate 126, aspartate 128, aspartate 130, glutamate 132, and glutamate 137.

It belongs to the centrin family. In terms of tissue distribution, ubiquitous.

In terms of biological role, this calcium-binding protein is found in the basal body complexes (the functional homolog of the centrosome in animal cell). In mitotic cells it is specifically associated with the poles of the mitotic spindles at the sites of the duplicated basal body complexes. The chain is Caltractin from Spermatozopsis similis (Green alga).